The sequence spans 436 residues: MLDKDEDAEYERSVEMFRLKKLIHKLDNLKGSGTSMISLIINYKDQINPFMKMLVDEVGKASNIKSRVTRQNVTDALTSTMEKLKLYNKTPNNGLIIYCGLASEGDSGEKMFKIDMEPFKPINTSLYRCDSVFHTEEVKKLLEDNDRFGFLIMDGNGSLFGSVQGATRTVIQKFLVDLPKKHGRGGQSSNRFARIRTERRHNYLRKVAETMTAVFITNDRPNVKGLILAGSADFKTDLNKSDLFDPRLSPLVIKIVDIAYGGENGFNQAIELSSDALRNVKFVHEKKIVGRFFDEISKDTGRFVFGLKDTMEGLEYGAVEVLMIFENLEHNRLSLKDNNNTVTFKIFPKKETPSGNKFRDENGVEYEIIDNTPLSEWFLDNYKKFGTHLEIITDKSSEGNQFVKGFGGIGGILRYKMEQTHGDVETEDAFNEDDFI.

The protein belongs to the eukaryotic release factor 1 family. In terms of assembly, heterodimer of two subunits, one of which binds GTP.

It is found in the cytoplasm. In terms of biological role, directs the termination of nascent peptide synthesis (translation) in response to the termination codons UAA and possibly also UAG and UGA. This chain is Eukaryotic peptide chain release factor subunit 1 (eRF1), found in Dileptus margaritifer (Ciliate).